We begin with the raw amino-acid sequence, 147 residues long: Large ribosomal subunit protein uL15 (147 aa).

The interval 1–54 is disordered; that stretch reads MKLFELQPAPGSKKLPNRKGRGIGSGNGKTGGRGHKGQNARAGGGVRPGFEGGQ. Gly residues-rich tracts occupy residues 22-31 and 42-52; these read GIGSGNGKTG and AGGGVRPGFEG.

This sequence belongs to the universal ribosomal protein uL15 family. Part of the 50S ribosomal subunit.

Functionally, binds to the 23S rRNA. The protein is Large ribosomal subunit protein uL15 of Ruminiclostridium cellulolyticum (strain ATCC 35319 / DSM 5812 / JCM 6584 / H10) (Clostridium cellulolyticum).